A 239-amino-acid chain; its full sequence is Putative ankyrin repeat protein RBE_0489 (239 aa).

3 ANK repeats span residues 23 to 52 (ISSR…SPNA), 80 to 109 (GIDT…FINA), and 113 to 143 (FGFT…SLTL).

This Rickettsia bellii (strain RML369-C) protein is Putative ankyrin repeat protein RBE_0489.